The chain runs to 281 residues: 2-dehydro-3-deoxyphosphooctonate aldolase (281 aa).

Belongs to the KdsA family.

The protein resides in the cytoplasm. The catalysed reaction is D-arabinose 5-phosphate + phosphoenolpyruvate + H2O = 3-deoxy-alpha-D-manno-2-octulosonate-8-phosphate + phosphate. Its pathway is carbohydrate biosynthesis; 3-deoxy-D-manno-octulosonate biosynthesis; 3-deoxy-D-manno-octulosonate from D-ribulose 5-phosphate: step 2/3. It functions in the pathway bacterial outer membrane biogenesis; lipopolysaccharide biosynthesis. The sequence is that of 2-dehydro-3-deoxyphosphooctonate aldolase from Pseudomonas fluorescens (strain Pf0-1).